Here is a 389-residue protein sequence, read N- to C-terminus: Aspartic protease 6 (389 aa).

Positions 1–15 (MKTFILLAVLGLASA) are cleaved as a signal peptide. Residues 71 to 384 (YLGNITIGTP…DIGNKRMGFA (314 aa)) enclose the Peptidase A1 domain. Residue asparagine 74 is glycosylated (N-linked (GlcNAc...) asparagine). Aspartate 89 is a catalytic residue. Cysteine 102 and cysteine 106 form a disulfide bridge. Aspartate 277 is a catalytic residue. Cysteines 312 and 344 form a disulfide.

It belongs to the peptidase A1 family. In terms of processing, glycosylated. Has phosphorylcholine-substituted oligosaccharide N-glycans. In terms of tissue distribution, expressed in intestine, muscles, pharynx and hypodermis.

It is found in the secreted. Functionally, aspartic protease. This chain is Aspartic protease 6, found in Caenorhabditis elegans.